We begin with the raw amino-acid sequence, 538 residues long: Pentatricopeptide repeat-containing protein At1g33350 (538 aa).

10 PPR repeats span residues 87 to 123 (NTHLYAAVLTAYSSSLPLHASSAFSFFRLMVNRSVPR), 125 to 159 (NHFIYPLVLKSTPYLSSAFSTPLVHTHLFKSGFHL), 160 to 191 (YVVVQTALLHSYASSVSHITLARQLFDEMSER), 192 to 226 (NVVSWTAMLSGYARSGDISNAVALFEDMPERDVPS), 227 to 253 (WNAILAACTQNGLFLEAVSLFRRMINE), 259 to 293 (NEVTVVCVLSACAQTGTLQLAKGIHAFAYRRDLSS), 294 to 324 (DVFVSNSLVDLYGKCGNLEEASSVFKMASKK), 325 to 359 (SLTAWNSMINCFALHGRSEEAIAVFEEMMKLNIND), 363 to 398 (DHITFIGLLNACTHGGLVSKGRGYFDLMTNRFGIEP), and 399 to 433 (RIEHYGCLIDLLGRAGRFDEALEVMSTMKMKADEA). The interval 434 to 509 (IWGSLLNACK…PPGWSRIEID (76 aa)) is type E motif.

It belongs to the PPR family. PCMP-E subfamily.

The chain is Pentatricopeptide repeat-containing protein At1g33350 (PCMP-E57) from Arabidopsis thaliana (Mouse-ear cress).